The following is a 318-amino-acid chain: Probable metal transport system membrane protein CT_070 (318 aa).

Transmembrane regions (helical) follow at residues 1–21 (MVAS…LVFF), 39–59 (IQVI…TFLV), 64–84 (AMYA…VCLF), 94–114 (QALT…IHFI), 124–144 (ASTA…LVFL), 170–190 (IFLV…SFVC), 196–216 (IFAF…MLLL), 226–246 (AVGV…AKLI), 252–272 (EMMV…PALS), and 285–305 (TSGL…VFVC).

The protein belongs to the ABC-3 integral membrane protein family.

The protein localises to the cell inner membrane. Part of an ATP-driven transport system CT_067/CT_068/CT_069/CT_070 for a metal. The polypeptide is Probable metal transport system membrane protein CT_070 (Chlamydia trachomatis serovar D (strain ATCC VR-885 / DSM 19411 / UW-3/Cx)).